A 632-amino-acid chain; its full sequence is POU domain, class 2, transcription factor 1 (632 aa).

Phosphothreonine occurs at positions 157 and 163. The 75-residue stretch at 167-241 (EEPSDLEELE…LLEKWLNDAE (75 aa)) folds into the POU-specific domain. The residue at position 170 (Ser170) is a Phosphoserine. Over residues 243 to 258 (LSSDSTASSPSALNSP) the composition is skewed to low complexity. Residues 243–273 (LSSDSTASSPSALNSPGLGAEGLNRRRKKRT) form a disordered region. Positions 268 to 327 (RRKKRTSIETNIRVALEKSFMENQKPTSEDITLIAEQLNMEKEVIRVWFCNRRQKEKRIN) form a DNA-binding region, homeobox. 2 positions are modified to phosphoserine: Ser274 and Ser337. The interval 385–448 (GTTDSTSNNT…STPLPSPLGA (64 aa)) is disordered. A compositionally biased stretch (low complexity) spans 394-441 (TATVISTAPPASSAVTSPSLSPSPSASASTSEASSASETSTTQTTSTP).

Belongs to the POU transcription factor family. Class-2 subfamily. Interacts with POU2AF1; the interaction increases POU2F1 transactivation activity. Interacts with NR3C1, AR, PGR and HCFC1. Phosphorylated by PRKDC. Widely expressed.

The protein resides in the nucleus. In terms of biological role, transcription factor that binds to the octamer motif (5'-ATTTGCAT-3') and activates the promoters of the genes for some small nuclear RNAs (snRNA) and of genes such as those for histone H2B and immunoglobulins. Modulates transcription transactivation by NR3C1, AR and PGR. In Rattus norvegicus (Rat), this protein is POU domain, class 2, transcription factor 1 (Pou2f1).